The primary structure comprises 628 residues: DNA primase (628 aa).

The segment at 40 to 64 (CPFHEERSPSFSVAEDKQIFHCFGC) adopts a CHC2-type zinc-finger fold. In terms of domain architecture, Toprim spans 269-351 (NTVLLFEGFM…DLSIVSIPEK (83 aa)). Mg(2+) contacts are provided by Glu-275, Asp-319, and Asp-321.

It belongs to the DnaG primase family. Monomer. Interacts with DnaB. Zn(2+) is required as a cofactor. Requires Mg(2+) as cofactor.

It catalyses the reaction ssDNA + n NTP = ssDNA/pppN(pN)n-1 hybrid + (n-1) diphosphate.. Functionally, RNA polymerase that catalyzes the synthesis of short RNA molecules used as primers for DNA polymerase during DNA replication. The polypeptide is DNA primase (Enterococcus faecalis (strain ATCC 700802 / V583)).